A 341-amino-acid chain; its full sequence is Ketol-acid reductoisomerase (NADP(+)) (341 aa).

Positions 1 to 182 (MATIYYDKDA…GCTRAGVLET (182 aa)) constitute a KARI N-terminal Rossmann domain. NADP(+) is bound by residues 25–28 (YGSQ), S51, S53, and 83–86 (DQTQ). H108 is a catalytic residue. G134 provides a ligand contact to NADP(+). A KARI C-terminal knotted domain is found at 183–328 (TFKEETETDL…KRLRDMMSWI (146 aa)). 4 residues coordinate Mg(2+): D191, E195, E227, and E231. S252 lines the substrate pocket.

Belongs to the ketol-acid reductoisomerase family. The cofactor is Mg(2+).

The enzyme catalyses (2R)-2,3-dihydroxy-3-methylbutanoate + NADP(+) = (2S)-2-acetolactate + NADPH + H(+). The catalysed reaction is (2R,3R)-2,3-dihydroxy-3-methylpentanoate + NADP(+) = (S)-2-ethyl-2-hydroxy-3-oxobutanoate + NADPH + H(+). Its pathway is amino-acid biosynthesis; L-isoleucine biosynthesis; L-isoleucine from 2-oxobutanoate: step 2/4. It participates in amino-acid biosynthesis; L-valine biosynthesis; L-valine from pyruvate: step 2/4. Its function is as follows. Involved in the biosynthesis of branched-chain amino acids (BCAA). Catalyzes an alkyl-migration followed by a ketol-acid reduction of (S)-2-acetolactate (S2AL) to yield (R)-2,3-dihydroxy-isovalerate. In the isomerase reaction, S2AL is rearranged via a Mg-dependent methyl migration to produce 3-hydroxy-3-methyl-2-ketobutyrate (HMKB). In the reductase reaction, this 2-ketoacid undergoes a metal-dependent reduction by NADPH to yield (R)-2,3-dihydroxy-isovalerate. The polypeptide is Ketol-acid reductoisomerase (NADP(+)) (Anaeromyxobacter dehalogenans (strain 2CP-C)).